We begin with the raw amino-acid sequence, 151 residues long: Decarboxylase nsrE (151 aa).

The region spanning 31 to 126 (AGMTEEDYHN…VGDHENFADT (96 aa)) is the EthD domain.

It belongs to the tpcK family.

It catalyses the reaction atrochrysone carboxylate + H(+) = atrochrysone + CO2. The protein operates within secondary metabolite biosynthesis. Its function is as follows. Decarboxylase; part of the gene cluster that mediates the biosynthesis of the tetrahydroxanthone dimer neosartorin, which exhibits antibacterial activity. The two different monomeric units appear to be synthesized by the same set of enzymes, among which the Baeyer-Villiger monooxygenase nsrF is the key enzyme for the divergence of the biosynthetic routes. The pathway begins with the synthesis of atrochrysone thioester by the polyketide synthase nsrB. The atrochrysone carboxyl ACP thioesterase nsrC then breaks the thioester bond and releases the atrochrysone carboxylic acid from AacuL. Atrochrysone carboxylic acid is decarboxylated by the decarboxylase nsrE, and oxidized by the anthrone oxygenase nsrD to yield emodin. Emodin is then reduced to emodin hydroquinone by the oxidoreductase nsrR. A-ring reduction by the short chain dehydrogenase nsrJ, dehydration by the scytalone dehydratase-like protein nsrI and probable spontaneous re-oxidation, results in overall deoxygenation to chrysophanol. The Baeyer-Villiger monooxygenase nsrF accepts chrysophanol as a substrate to insert one oxygen atom at two different positions to yield the precursors of both monomric units. NsrF is promiscuous/flexible in interacting with the 2 (non methylated and methylated) aromatic rings of chrysophanol, thus diverging the biosynthetic pathway at this point. After the hydrolysis of the lactones, methylesterification by the methyltransferase nsrG yields respectively moniliphenone and 2,2',6'-trihydroxy-4-methyl-6-methoxya-cyldiphenylmethanone. The next steps are the hydroxylation by the FAD-dependent monooxygenase nsrK, followed by isomerization by the monooxygenase nsrQ. The short chain dehydrogenase/reductase nsrO then catalyzes the C-5 ketoreduction to give the xanthone skeleton of blennolide C and 5-acetylblennolide A. The acetyltransferase nsrL has a strict substrate specificity and uses only blennolide A but not blennolide C to yield 5-acetylblennolide A as the single-acetylated product. In the final step of the biosynthesis, the heterodimerization of the 2 xanthones, blennolide C and 5-acetylblennolide A, is catalyzed by the cytochrome P450 monooxygenase nsrP. NsrP can utilize at least three different xanthones as its substrates to perform the dimerization reaction. This is Decarboxylase nsrE from Aspergillus novofumigatus (strain IBT 16806).